The following is a 427-amino-acid chain: Protein TIFY 6a (427 aa).

Residues 1–25 (MERDFLGAIWRKEEAAGKPEEHSDY) are compositionally biased toward basic and acidic residues. Disordered regions lie at residues 1-32 (MERDFLGAIWRKEEAAGKPEEHSDYRGGGGGA) and 128-154 (YGVAAPHHFPSPSPSPRHPVPFGHANP). Over residues 136–146 (FPSPSPSPRHP) the composition is skewed to pro residues. One can recognise a Tify domain in the interval 196–231 (QNPKVTQMTIFYDGLVNVFDNIPVEKAQELMLLASR). The interval 296-327 (SFSSSNDSAGPKSGGLPLAVTPLSQASPSQPI) is disordered. A compositionally biased stretch (polar residues) spans 317–327 (PLSQASPSQPI). The Jas signature appears at 343 to 367 (PQARKASLARFLEKRKERVSSVAPY). Residues 345-352 (ARKASLAR) carry the Nuclear localization signal motif. The disordered stretch occupies residues 361–427 (VSSVAPYPSS…QEPPSTKLQI (67 aa)). 2 stretches are compositionally biased toward polar residues: residues 369–402 (SSKSPLESSDTIGSPSTPSKSSCTDITPSTNNCE) and 411–427 (RNISFSSQEPPSTKLQI).

The protein belongs to the TIFY/JAZ family. As to quaternary structure, interacts with COI1A. Interacts with COI1A and COI1B in a coronatine-dependent manner. Coronatine is an analog of jasmonoyl isoleucine (JA-Ile). Ubiquitinated. Targeted for degradation by the SCF(COI1) E3 ubiquitin ligase-proteasome pathway during jasmonate signaling.

The protein resides in the nucleus. In terms of biological role, repressor of jasmonate responses. This is Protein TIFY 6a from Oryza sativa subsp. japonica (Rice).